A 141-amino-acid polypeptide reads, in one-letter code: MLSPRRTKYRKQHRGRLKGTATRGNRICFGRFALQALEPSWITSRQIEAGRRAMTRYARRGGKLWIRIFPDKSITMRPAETRMGSGKGAPEYWVAVVKPGRILYEMSGVSETVARSAMKIASYKMPIKTQFLVASKDSITV.

Basic residues predominate over residues 1–17 (MLSPRRTKYRKQHRGRL). The interval 1–20 (MLSPRRTKYRKQHRGRLKGT) is disordered.

The protein belongs to the universal ribosomal protein uL16 family. Part of the 50S ribosomal subunit.

The protein resides in the plastid. The protein localises to the chloroplast. This Staurastrum punctulatum (Green alga) protein is Large ribosomal subunit protein uL16c.